The sequence spans 820 residues: Scavenger receptor class F member 1 (820 aa).

The first 23 residues, 1–23 (MLAAMGLELVFSLLLLWTQGTQG), serve as a signal peptide directing secretion. Residues 24–422 (STLDPAGQHV…TCQLGRHGKN (399 aa)) are Extracellular-facing. EGF-like domains lie at 56–90 (TIPI…AQCS), 98–133 (WGHD…RLCE), 163–193 (RRPC…RRCS), and 217–251 (WGPE…IRCE). 12 disulfides stabilise this stretch: Cys60–Cys72, Cys66–Cys78, Cys80–Cys89, Cys102–Cys114, Cys108–Cys121, Cys123–Cys132, Cys166–Cys174, Cys168–Cys181, Cys183–Cys192, Cys221–Cys232, Cys225–Cys239, and Cys241–Cys250. An N-linked (GlcNAc...) asparagine glycan is attached at Asn291. 2 EGF-like domains span residues 304 to 341 (FGER…HRCE) and 353 to 384 (CSST…TSCN). The chain crosses the membrane as a helical span at residues 423–443 (ALIVGILVPLLLLLMGIVCCA). Over 444-820 (YCCSGTRLDP…VVPMSVPPQH (377 aa)) the chain is Cytoplasmic. 2 disordered regions span residues 549–685 (PMAQ…IQES) and 715–820 (NYQK…PPQH). Ser590 and Ser607 each carry phosphoserine. Positions 631-648 (QEAEESTGPEQVNTEEDA) are enriched in acidic residues. Positions 650–662 (TATSSGDPATSHG) are enriched in polar residues.

In terms of assembly, heterophilic interaction with SREC2 via its extracellular domain. The heterophilic interaction is suppressed by the presence of ligand such as Ac-LDL. Interacts with AVIL; the interaction occurs in embryonic dorsal root ganglions at 18 dpc and induces neurite-like outgrowth. As to expression, expressed weakly in brain, spinal cord and dorsal root ganglions.

The protein resides in the membrane. Functionally, mediates the binding and degradation of acetylated low density lipoprotein (Ac-LDL). Mediates heterophilic interactions, suggesting a function as adhesion protein. Plays a role in the regulation of neurite-like outgrowth. The protein is Scavenger receptor class F member 1 (Scarf1) of Mus musculus (Mouse).